Consider the following 155-residue polypeptide: Large ribosomal subunit protein bL9c (155 aa).

Belongs to the bacterial ribosomal protein bL9 family.

Its subcellular location is the plastid. It localises to the chloroplast. In terms of biological role, binds to the 23S rRNA. The chain is Large ribosomal subunit protein bL9c from Porphyra purpurea (Red seaweed).